The primary structure comprises 620 residues: Chaperone protein HscA homolog (620 aa).

Belongs to the heat shock protein 70 family.

Its function is as follows. Chaperone involved in the maturation of iron-sulfur cluster-containing proteins. Has a low intrinsic ATPase activity which is markedly stimulated by HscB. This is Chaperone protein HscA homolog from Shewanella putrefaciens (strain CN-32 / ATCC BAA-453).